A 396-amino-acid polypeptide reads, in one-letter code: Diphosphomevalonate decarboxylase (396 aa).

Residues 19–22 (YWGK), R74, 153–158 (SGSACR), and T209 each bind (R)-5-diphosphomevalonate.

The protein belongs to the diphosphomevalonate decarboxylase family. In terms of assembly, homodimer.

The catalysed reaction is (R)-5-diphosphomevalonate + ATP = isopentenyl diphosphate + ADP + phosphate + CO2. It functions in the pathway isoprenoid biosynthesis; isopentenyl diphosphate biosynthesis via mevalonate pathway; isopentenyl diphosphate from (R)-mevalonate: step 3/3. In terms of biological role, diphosphomevalonate decarboxylase; part of the second module of ergosterol biosynthesis pathway that includes the middle steps of the pathway. MVD1/ERG19 converts diphosphomevalonate into isopentenyl diphosphate. The second module is carried out in the vacuole and involves the formation of farnesyl diphosphate, which is also an important intermediate in the biosynthesis of ubiquinone, dolichol, heme and prenylated proteins. Activity by the mevalonate kinase ERG12 first converts mevalonate into 5-phosphomevalonate. 5-phosphomevalonate is then further converted to 5-diphosphomevalonate by the phosphomevalonate kinase ERG8. The diphosphomevalonate decarboxylase MVD1/ERG19 then produces isopentenyl diphosphate. The isopentenyl-diphosphate delta-isomerase IDI1 then catalyzes the 1,3-allylic rearrangement of the homoallylic substrate isopentenyl (IPP) to its highly electrophilic allylic isomer, dimethylallyl diphosphate (DMAPP). Finally the farnesyl diphosphate synthase ERG20 catalyzes the sequential condensation of isopentenyl pyrophosphate with dimethylallyl pyrophosphate, and then with the resultant geranylpyrophosphate to the ultimate product farnesyl pyrophosphate. In Saccharomyces cerevisiae (strain ATCC 204508 / S288c) (Baker's yeast), this protein is Diphosphomevalonate decarboxylase.